We begin with the raw amino-acid sequence, 61 residues long: Short neurotoxin 1 (61 aa).

4 cysteine pairs are disulfide-bonded: Cys3/Cys23, Cys17/Cys40, Cys42/Cys53, and Cys54/Cys59.

Belongs to the three-finger toxin family. Short-chain subfamily. Type I alpha-neurotoxin sub-subfamily. As to expression, expressed by the venom gland.

Its subcellular location is the secreted. Its function is as follows. Binds to muscle nicotinic acetylcholine receptor (nAChR) and inhibit acetylcholine from binding to the receptor, thereby impairing neuromuscular transmission. In Naja samarensis (Peters' cobra), this protein is Short neurotoxin 1.